Consider the following 290-residue polypeptide: MQGKIIKSLAGFYYVESEGQVYQTRARGNFRKRGETPYVGDIVDFSAEDNSEGYILAIYPRKNSLVRPPIVNIDQAVVIMSAKEPEFNSNLLDRFLILLEHKAIHPVVYISKMDLLDSPEEIKAIGRQYQAIGYDFVTSLEELLPLLADKITVFMGQTGVGKSTLLNRIAPELALETGEISDSLGRGRHTTRAVSFYNTHGGKIADTPGFSSLDYDIANAEDLNEAFPELRRLSHECKFRSCTHTHEPKCAVKAALETGELWPVRYEHYLQFLSEIENRRETYKKVIKRK.

The 152-residue stretch at 62-213 (KNSLVRPPIV…IADTPGFSSL (152 aa)) folds into the CP-type G domain. GTP-binding positions include 111 to 114 (SKMD) and 156 to 164 (GQTGVGKST). Zn(2+) contacts are provided by C237, C242, H244, and C250.

Belongs to the TRAFAC class YlqF/YawG GTPase family. RsgA subfamily. As to quaternary structure, monomer. Associates with 30S ribosomal subunit, binds 16S rRNA. The cofactor is Zn(2+).

The protein resides in the cytoplasm. Its function is as follows. One of several proteins that assist in the late maturation steps of the functional core of the 30S ribosomal subunit. Helps release RbfA from mature subunits. May play a role in the assembly of ribosomal proteins into the subunit. Circularly permuted GTPase that catalyzes slow GTP hydrolysis, GTPase activity is stimulated by the 30S ribosomal subunit. The sequence is that of Small ribosomal subunit biogenesis GTPase RsgA from Streptococcus pyogenes serotype M3 (strain ATCC BAA-595 / MGAS315).